The sequence spans 61 residues: Large ribosomal subunit protein uL30 (61 aa).

This sequence belongs to the universal ribosomal protein uL30 family. As to quaternary structure, part of the 50S ribosomal subunit.

The chain is Large ribosomal subunit protein uL30 from Acidithiobacillus ferrooxidans (strain ATCC 23270 / DSM 14882 / CIP 104768 / NCIMB 8455) (Ferrobacillus ferrooxidans (strain ATCC 23270)).